Here is a 649-residue protein sequence, read N- to C-terminus: MEPSGSEQLYEDPDPGGKSQDAEARRQTESEQKLSKMTHNALENINVIGQGLKHLFQHQRRRSSVSPHDVQQIQTDPEPEVDLDSQNACAEIDGVSTHPTALNRVLQQIRVPPKMKRGTSLHSRRGKSEAPKGSPQINRKSGQEVAAVIQSGRPRSSSTTDAPTSSSVMEIACAAGVCVPGEEATAERIERLEVSSLAQTSSAVASSTDGSIHTESVDGIPDPQRTKAAIAHLQQKILKLTEQIKIAQTARDDNVAEYLKLANSADKQQAARIKQVFEKKNQKSAQTILQLQKKLEHYHRKLREVEQNGIPRQPKDVFRDMHQGLKDVGAKVTGFSEGVVDSVKGGFSSFSQATHSAAGAVVSKPREIASLIRNKFGSADNIPNLKDSLEEGQVDDGGKALGVISNFQSSPKYGSEEDCSSATSGSVGANSTTGGIAVGASSSKTNTLDMQSSGFDALLHEVQEIRETQARLEDSFETLKEHYQRDYSLIMQTLQEERYRCERLEEQLNDLTELHQNEILNLKQELASMEEKIAYQSYERARDIQEALEACQTRISKMELQQQQQQVVQLEGLENATARNLLGKLINILLAVMAVLLVFVSTVANCVVPLMKTRNRTFSTLFLVAFIAFLWKHWDALFSYVDRLFSPPR.

Residue methionine 1 is modified to N-acetylmethionine. Disordered stretches follow at residues 1-37, 58-83, 110-166, and 197-222; these read MEPS…LSKM, HQRR…EVDL, RVPP…PTSS, and LAQT…GIPD. The Cytoplasmic segment spans residues 1–587; the sequence is MEPSGSEQLY…ARNLLGKLIN (587 aa). The span at 20 to 34 shows a compositional bias: basic and acidic residues; that stretch reads QDAEARRQTESEQKL. The segment covering 64-75 has biased composition (polar residues); it reads SVSPHDVQQIQT. A compositionally biased stretch (basic residues) spans 113 to 125; it reads PKMKRGTSLHSRR. The span at 156 to 166 shows a compositional bias: low complexity; sequence SSSTTDAPTSS. Polar residues predominate over residues 197-214; the sequence is LAQTSSAVASSTDGSIHT. Residues 224-310 adopt a coiled-coil conformation; that stretch reads QRTKAAIAHL…KLREVEQNGI (87 aa). Phosphoserine is present on residues serine 378 and serine 410. The segment at 411–433 is disordered; that stretch reads PKYGSEEDCSSATSGSVGANSTT. Residues 420 to 433 show a composition bias toward polar residues; it reads SSATSGSVGANSTT. Residues 457 to 566 are a coiled coil; that stretch reads ALLHEVQEIR…KMELQQQQQQ (110 aa). A run of 2 helical transmembrane segments spans residues 588-608 and 621-641; these read ILLA…NCVV and LFLV…FSYV. The Cytoplasmic portion of the chain corresponds to 642 to 649; the sequence is DRLFSPPR.

This sequence belongs to the TEX28 family. As to quaternary structure, may form homodimers and heterodimers with TMCC2 or TMCC3 via the coiled-coil domains. Interacts with ribosomal proteins RPL4 and RPS6.

The protein localises to the endoplasmic reticulum membrane. Endoplasmic reticulum membrane protein that promotes endoplasmic reticulum-associated endosome fission. Localizes to contact sites between the endoplasmic reticulum and endosomes and acts by promoting recruitment of the endoplasmic reticulum to endosome tubules for fission. Endosome membrane fission of early and late endosomes is essential to separate regions destined for lysosomal degradation from carriers to be recycled to the plasma membrane. The chain is Transmembrane and coiled-coil domains protein 1 (Tmcc1) from Mus musculus (Mouse).